We begin with the raw amino-acid sequence, 404 residues long: Caspase-1 (404 aa).

The CARD domain maps to 1–91 (MADKVLKEKR…HLAGVLELST (91 aa)). Positions 1–119 (MADKVLKEKR…PFPAPQTVQD (119 aa)) are excised as a propeptide. A disordered region spans residues 111–132 (FPAPQTVQDNPVKPASSEPRGS). Active-site residues include histidine 237 and cysteine 285. Residues 298–316 (SVGPSGNSSLLAAEDFEYD) constitute a propeptide that is removed on maturation. At serine 302 the chain carries Phosphoserine.

It belongs to the peptidase C14A family. As to quaternary structure, heterotetramer that consists of two anti-parallel arranged heterodimers, each one formed by a 20 kDa (Caspase-1 subunit p20) and a 10 kDa (Caspase-1 subunit p10) subunit. May be a component of the inflammasome, a protein complex which also includes PYCARD, CARD8 and NLRP2 and whose function would be the activation of pro-inflammatory caspases. Component of the AIM2 PANoptosome complex, a multiprotein complex that drives inflammatory cell death (PANoptosis). Both the p10 and p20 subunits interact with MEFV. Interacts with CARD17P/INCA and CARD18. Interacts with SERPINB1; this interaction regulates CASP1 activity. Heterotetramer that consists of two anti-parallel arranged heterodimers, each one formed by a 20 kDa (Caspase-1 subunit p20) and a 10 kDa (Caspase-1 subunit p10) subunit. Post-translationally, the two subunits are derived from the precursor sequence by an autocatalytic mechanism. Ubiquitinated via 'Lys-11'-linked polyubiquitination. Deubiquitinated by USP8.

It localises to the cytoplasm. The protein resides in the cell membrane. The catalysed reaction is Strict requirement for an Asp residue at position P1 and has a preferred cleavage sequence of Tyr-Val-Ala-Asp-|-.. Thiol protease involved in a variety of inflammatory processes by proteolytically cleaving other proteins, such as the precursors of the inflammatory cytokines interleukin-1 beta (IL1B) and interleukin 18 (IL18) as well as the pyroptosis inducer Gasdermin-D (GSDMD), into active mature peptides. Plays a key role in cell immunity as an inflammatory response initiator: once activated through formation of an inflammasome complex, it initiates a pro-inflammatory response through the cleavage of the two inflammatory cytokines IL1B and IL18, releasing the mature cytokines which are involved in a variety of inflammatory processes. Cleaves a tetrapeptide after an Asp residue at position P1. Also initiates pyroptosis, a programmed lytic cell death pathway, through cleavage of GSDMD. In contrast to cleavage of interleukin IL1B, recognition and cleavage of GSDMD is not strictly dependent on the consensus cleavage site but depends on an exosite interface on CASP1 that recognizes and binds the Gasdermin-D, C-terminal (GSDMD-CT) part. Cleaves and activates CASP7 in response to bacterial infection, promoting plasma membrane repair. Upon inflammasome activation, during DNA virus infection but not RNA virus challenge, controls antiviral immunity through the cleavage of CGAS, rendering it inactive. In apoptotic cells, cleaves SPHK2 which is released from cells and remains enzymatically active extracellularly. The chain is Caspase-1 (CASP1) from Sus scrofa (Pig).